The following is a 250-amino-acid chain: Small ribosomal subunit protein uS2 (250 aa).

This sequence belongs to the universal ribosomal protein uS2 family.

The chain is Small ribosomal subunit protein uS2 from Paraburkholderia phymatum (strain DSM 17167 / CIP 108236 / LMG 21445 / STM815) (Burkholderia phymatum).